The sequence spans 372 residues: PqqA peptide cyclase (372 aa).

The Radical SAM core domain maps to 4–220 (APPPLSVLLE…ETARRQLGDR (217 aa)). Residues cysteine 18, cysteine 22, and cysteine 25 each coordinate [4Fe-4S] cluster. The tract at residues 342 to 372 (ATAEQESASPAPAFIYRRPERPAAATADPLE) is disordered.

This sequence belongs to the radical SAM superfamily. PqqE family. Interacts with PqqD. The interaction is necessary for activity of PqqE. [4Fe-4S] cluster is required as a cofactor.

It catalyses the reaction [PQQ precursor protein] + S-adenosyl-L-methionine = E-Y cross-linked-[PQQ precursor protein] + 5'-deoxyadenosine + L-methionine + H(+). It participates in cofactor biosynthesis; pyrroloquinoline quinone biosynthesis. Catalyzes the cross-linking of a glutamate residue and a tyrosine residue in the PqqA protein as part of the biosynthesis of pyrroloquinoline quinone (PQQ). The chain is PqqA peptide cyclase from Xanthomonas euvesicatoria pv. vesicatoria (strain 85-10) (Xanthomonas campestris pv. vesicatoria).